Here is a 155-residue protein sequence, read N- to C-terminus: Protein-export protein SecB (155 aa).

It belongs to the SecB family. Homotetramer, a dimer of dimers. One homotetramer interacts with 1 SecA dimer.

It localises to the cytoplasm. In terms of biological role, one of the proteins required for the normal export of preproteins out of the cell cytoplasm. It is a molecular chaperone that binds to a subset of precursor proteins, maintaining them in a translocation-competent state. It also specifically binds to its receptor SecA. The polypeptide is Protein-export protein SecB (Shigella sonnei (strain Ss046)).